Here is a 245-residue protein sequence, read N- to C-terminus: Complement C1q subcomponent subunit C (245 aa).

An N-terminal signal peptide occupies residues 1-28; it reads MDVGPSSLPHLGLKLLLLLLLLPLRGQA. In terms of domain architecture, Collagen-like spans 31-112; that stretch reads GCYGIPGMPG…GIPGEPGEEG (82 aa). Pro-36, Pro-39, Pro-42, Pro-45, Pro-54, and Pro-63 each carry 4-hydroxyproline. Residues 45-113 are disordered; that stretch reads PGKDGYDGLP…IPGEPGEEGR (69 aa). Over residues 54 to 71 the composition is skewed to low complexity; the sequence is PGPKGEPGIPAIPGIRGP. 5-hydroxylysine is present on Lys-75. Residue Lys-75 is glycosylated (O-linked (Gal...) hydroxylysine). 5 positions are modified to 4-hydroxyproline: Pro-81, Pro-93, Pro-96, Pro-99, and Pro-105. The segment covering 90–99 has biased composition (pro residues); sequence MGPPGMPGVP. Positions 115–245 constitute a C1q domain; the sequence is KQKFQSVFTV…VFSGFLLFPD (131 aa). The cysteines at positions 179 and 193 are disulfide-linked.

In terms of assembly, core component of the complement C1 complex, a calcium-dependent complex composed of 1 molecule of the C1Q subcomplex, 2 molecules of C1R and 2 molecules of C1S. The C1Q subcomplex is composed 18 subunits: 3 chains of C1QA, C1QB, and C1QC trimerize to form 6 collagen-like triple helices connected to six globular ligand-recognition modules (C1q domain). Post-translationally, O-linked glycans consist of Glc-Gal disaccharides bound to the oxygen atom of post-translationally added hydroxyl groups.

It localises to the secreted. The protein localises to the cell surface. With respect to regulation, the C1Q subcomplex is inhibited by sulfated molecules, such as triterpenoid sulfates, heparan sulfate, or chondroitin sulfates. In terms of biological role, core component of the complement C1 complex, a multiprotein complex that initiates the classical pathway of the complement system, a cascade of proteins that leads to phagocytosis and breakdown of pathogens and signaling that strengthens the adaptive immune system. The classical complement pathway is initiated by the C1Q subcomplex of the C1 complex, which specifically binds IgG or IgM immunoglobulins complexed with antigens, forming antigen-antibody complexes on the surface of pathogens: C1QA, together with C1QB and C1QC, specifically recognizes and binds the Fc regions of IgG or IgM via its C1q domain. Immunoglobulin-binding activates the proenzyme C1R, which cleaves C1S, initiating the proteolytic cascade of the complement system. The C1Q subcomplex is activated by a hexamer of IgG complexed with antigens, while it is activated by a pentameric IgM. The C1Q subcomplex also recognizes and binds phosphatidylserine exposed on the surface of cells undergoing programmed cell death, possibly promoting activation of the complement system. This chain is Complement C1q subcomponent subunit C, found in Homo sapiens (Human).